Consider the following 274-residue polypeptide: Large ribosomal subunit protein uL2 (274 aa).

The disordered stretch occupies residues 223-258 (VAMNPVDHPHGGGEGRTSGGRHPVTPWGIPTKGYKT).

It belongs to the universal ribosomal protein uL2 family. As to quaternary structure, part of the 50S ribosomal subunit. Forms a bridge to the 30S subunit in the 70S ribosome.

Its function is as follows. One of the primary rRNA binding proteins. Required for association of the 30S and 50S subunits to form the 70S ribosome, for tRNA binding and peptide bond formation. It has been suggested to have peptidyltransferase activity; this is somewhat controversial. Makes several contacts with the 16S rRNA in the 70S ribosome. The protein is Large ribosomal subunit protein uL2 of Pelobacter propionicus (strain DSM 2379 / NBRC 103807 / OttBd1).